A 538-amino-acid polypeptide reads, in one-letter code: Fusion glycoprotein F0 (538 aa).

The first 19 residues, 1–19 (MKAFPVICLGFAIFSSSIC), serve as a signal peptide directing secretion. Residues 20-486 (VNINILQQIG…VSVSSKIGAI (467 aa)) are Extracellular-facing. N-linked (GlcNAc...) asparagine; by host glycans are attached at residues Asn-56, Asn-73, and Asn-89. A fusion peptide region spans residues 103 to 127 (FAGIAIGIAALGVATAAQVTAAVSL). Residues 128–156 (VQAQTNARAIAAMKNSIQATNRAVFEVKE) are a coiled coil. N-linked (GlcNAc...) asparagine; by host glycosylation is present at Asn-182. Cys-324 and Cys-333 form a disulfide bridge. Asn-352 carries an N-linked (GlcNAc...) asparagine; by host glycan. 2 disulfide bridges follow: Cys-380-Cys-385 and Cys-387-Cys-410. Asn-427, Asn-433, and Asn-457 each carry an N-linked (GlcNAc...) asparagine; by host glycan. Residues 452-477 (ELSKVNASLQNAVKYIKESNHQLQSV) are a coiled coil. Residues 487 to 507 (IVAALVLSILSIIISLLFCFW) traverse the membrane as a helical segment. The Cytoplasmic portion of the chain corresponds to 508–538 (AYIATKEIRRINFKTNHINTISSSVDDLIRY).

This sequence belongs to the paramyxoviruses fusion glycoprotein family. Homotrimer; disulfide-linked F1-F2. Interacts with host LAMP1; LAMP2 and LAMP3; these interactions promote the cleavage of the viral fusion protein F. In terms of processing, the inactive precursor F0 is glycosylated and proteolytically cleaved into F1 and F2 to be functionally active. The cleavage is mediated by cellular proteases including host FURIN during the transport and maturation of the polypeptide.

Its subcellular location is the virion membrane. It is found in the host cell membrane. Functionally, class I viral fusion protein. Under the current model, the protein has at least 3 conformational states: pre-fusion native state, pre-hairpin intermediate state, and post-fusion hairpin state. During viral and plasma cell membrane fusion, the heptad repeat (HR) regions assume a trimer-of-hairpins structure, positioning the fusion peptide in close proximity to the C-terminal region of the ectodomain. The formation of this structure appears to drive apposition and subsequent fusion of viral and plasma cell membranes. Directs fusion of viral and cellular membranes leading to delivery of the nucleocapsid into the cytoplasm. This fusion is pH independent and occurs directly at the outer cell membrane. The trimer of F1-F2 (F protein) probably interacts with HN at the virion surface. Upon HN binding to its cellular receptor, the hydrophobic fusion peptide is unmasked and interacts with the cellular membrane, inducing the fusion between cell and virion membranes. Later in infection, F proteins expressed at the plasma membrane of infected cells could mediate fusion with adjacent cells to form syncytia, a cytopathic effect that could lead to tissue necrosis. This Homo sapiens (Human) protein is Fusion glycoprotein F0 (F).